The chain runs to 206 residues: dITP/XTP pyrophosphatase (206 aa).

Position 7-12 (7-12 (SRNPKK)) interacts with substrate. Asp72 acts as the Proton acceptor in catalysis. Asp72 is a Mg(2+) binding site. Substrate is bound by residues Ser73, 155-158 (FGYD), Lys178, and 183-184 (HR).

Belongs to the HAM1 NTPase family. In terms of assembly, homodimer. Requires Mg(2+) as cofactor.

The catalysed reaction is XTP + H2O = XMP + diphosphate + H(+). It carries out the reaction dITP + H2O = dIMP + diphosphate + H(+). It catalyses the reaction ITP + H2O = IMP + diphosphate + H(+). In terms of biological role, pyrophosphatase that catalyzes the hydrolysis of nucleoside triphosphates to their monophosphate derivatives, with a high preference for the non-canonical purine nucleotides XTP (xanthosine triphosphate), dITP (deoxyinosine triphosphate) and ITP. Seems to function as a house-cleaning enzyme that removes non-canonical purine nucleotides from the nucleotide pool, thus preventing their incorporation into DNA/RNA and avoiding chromosomal lesions. The polypeptide is dITP/XTP pyrophosphatase (Mycobacteroides abscessus (strain ATCC 19977 / DSM 44196 / CCUG 20993 / CIP 104536 / JCM 13569 / NCTC 13031 / TMC 1543 / L948) (Mycobacterium abscessus)).